Reading from the N-terminus, the 335-residue chain is Ketol-acid reductoisomerase (NADP(+)) (335 aa).

The KARI N-terminal Rossmann domain occupies 5 to 185 (SKIYTDNDAN…GATRAGVIPT (181 aa)). NADP(+) is bound by residues 28-31 (YGSQ), S56, and 86-89 (DMVQ). The active site involves H111. Residue G137 coordinates NADP(+). Positions 186 to 331 (TFKEETETDL…NQLRDLVQKG (146 aa)) constitute a KARI C-terminal knotted domain. Positions 194, 198, 230, and 234 each coordinate Mg(2+). S255 is a substrate binding site.

It belongs to the ketol-acid reductoisomerase family. Mg(2+) is required as a cofactor.

It catalyses the reaction (2R)-2,3-dihydroxy-3-methylbutanoate + NADP(+) = (2S)-2-acetolactate + NADPH + H(+). The catalysed reaction is (2R,3R)-2,3-dihydroxy-3-methylpentanoate + NADP(+) = (S)-2-ethyl-2-hydroxy-3-oxobutanoate + NADPH + H(+). Its pathway is amino-acid biosynthesis; L-isoleucine biosynthesis; L-isoleucine from 2-oxobutanoate: step 2/4. It participates in amino-acid biosynthesis; L-valine biosynthesis; L-valine from pyruvate: step 2/4. Its function is as follows. Involved in the biosynthesis of branched-chain amino acids (BCAA). Catalyzes an alkyl-migration followed by a ketol-acid reduction of (S)-2-acetolactate (S2AL) to yield (R)-2,3-dihydroxy-isovalerate. In the isomerase reaction, S2AL is rearranged via a Mg-dependent methyl migration to produce 3-hydroxy-3-methyl-2-ketobutyrate (HMKB). In the reductase reaction, this 2-ketoacid undergoes a metal-dependent reduction by NADPH to yield (R)-2,3-dihydroxy-isovalerate. The chain is Ketol-acid reductoisomerase (NADP(+)) from Saccharolobus solfataricus (strain ATCC 35092 / DSM 1617 / JCM 11322 / P2) (Sulfolobus solfataricus).